The following is a 352-amino-acid chain: Phosphate acetyltransferase (352 aa).

The protein belongs to the phosphate acetyltransferase and butyryltransferase family.

Its subcellular location is the cytoplasm. The enzyme catalyses acetyl-CoA + phosphate = acetyl phosphate + CoA. Its pathway is metabolic intermediate biosynthesis; acetyl-CoA biosynthesis; acetyl-CoA from acetate: step 2/2. In Borreliella burgdorferi (strain ATCC 35210 / DSM 4680 / CIP 102532 / B31) (Borrelia burgdorferi), this protein is Phosphate acetyltransferase (pta).